A 204-amino-acid chain; its full sequence is Guanylate kinase (204 aa).

In terms of domain architecture, Guanylate kinase-like spans 1–182 (MLYIISAPSG…ALSDLNTIIC (182 aa)). ATP is bound at residue 7-14 (APSGTGKS).

The protein belongs to the guanylate kinase family.

The protein resides in the cytoplasm. The enzyme catalyses GMP + ATP = GDP + ADP. Functionally, essential for recycling GMP and indirectly, cGMP. The sequence is that of Guanylate kinase from Baumannia cicadellinicola subsp. Homalodisca coagulata.